A 289-amino-acid polypeptide reads, in one-letter code: Elongation factor Ts (289 aa).

Residues 80-83 (TDFV) are involved in Mg(2+) ion dislocation from EF-Tu.

The protein belongs to the EF-Ts family.

Its subcellular location is the cytoplasm. In terms of biological role, associates with the EF-Tu.GDP complex and induces the exchange of GDP to GTP. It remains bound to the aminoacyl-tRNA.EF-Tu.GTP complex up to the GTP hydrolysis stage on the ribosome. This chain is Elongation factor Ts, found in Francisella tularensis subsp. tularensis (strain FSC 198).